Here is a 468-residue protein sequence, read N- to C-terminus: UDP-N-acetylmuramoyl-L-alanine--L-glutamate ligase (468 aa).

122–128 (GTKGKST) is a binding site for ATP.

It belongs to the MurCDEF family. MurD2 subfamily.

The protein localises to the cytoplasm. The enzyme catalyses UDP-N-acetyl-alpha-D-muramoyl-L-alanine + L-glutamate + ATP = UDP-N-acetyl-alpha-D-muramoyl-L-alanyl-L-glutamate + ADP + phosphate + H(+). It participates in cell wall biogenesis; peptidoglycan biosynthesis. Cell wall formation. Catalyzes the addition of L-glutamate to the nucleotide precursor UDP-N-acetylmuramoyl-L-alanine. The sequence is that of UDP-N-acetylmuramoyl-L-alanine--L-glutamate ligase from Xanthomonas euvesicatoria pv. vesicatoria (strain 85-10) (Xanthomonas campestris pv. vesicatoria).